We begin with the raw amino-acid sequence, 668 residues long: DNA ligase (668 aa).

Residues 35-39 (DQEYD), 84-85 (SL), and Glu-115 each bind NAD(+). Catalysis depends on Lys-117, which acts as the N6-AMP-lysine intermediate. Residues Arg-138, Glu-172, Lys-288, and Lys-312 each contribute to the NAD(+) site. Zn(2+) is bound by residues Cys-406, Cys-409, Cys-425, and Cys-430. One can recognise a BRCT domain in the interval 589–668 (KLEGPLKGLV…EEFFDKYGES (80 aa)).

It belongs to the NAD-dependent DNA ligase family. LigA subfamily. It depends on Mg(2+) as a cofactor. Mn(2+) is required as a cofactor.

The catalysed reaction is NAD(+) + (deoxyribonucleotide)n-3'-hydroxyl + 5'-phospho-(deoxyribonucleotide)m = (deoxyribonucleotide)n+m + AMP + beta-nicotinamide D-nucleotide.. DNA ligase that catalyzes the formation of phosphodiester linkages between 5'-phosphoryl and 3'-hydroxyl groups in double-stranded DNA using NAD as a coenzyme and as the energy source for the reaction. It is essential for DNA replication and repair of damaged DNA. This chain is DNA ligase, found in Petrotoga mobilis (strain DSM 10674 / SJ95).